The following is a 269-amino-acid chain: Tryptophan synthase alpha chain (269 aa).

Residues glutamate 49 and aspartate 60 each act as proton acceptor in the active site.

The protein belongs to the TrpA family. Tetramer of two alpha and two beta chains.

It carries out the reaction (1S,2R)-1-C-(indol-3-yl)glycerol 3-phosphate + L-serine = D-glyceraldehyde 3-phosphate + L-tryptophan + H2O. It participates in amino-acid biosynthesis; L-tryptophan biosynthesis; L-tryptophan from chorismate: step 5/5. Its function is as follows. The alpha subunit is responsible for the aldol cleavage of indoleglycerol phosphate to indole and glyceraldehyde 3-phosphate. The chain is Tryptophan synthase alpha chain from Pseudomonas putida (strain ATCC 47054 / DSM 6125 / CFBP 8728 / NCIMB 11950 / KT2440).